A 132-amino-acid chain; its full sequence is Ribonuclease VapC15 (132 aa).

Positions 1–121 (MIVDTSVWIA…HRDRDYEAIR (121 aa)) constitute a PINc domain. Mg(2+) is bound at residue aspartate 96. Positions 96, 114, and 116 each coordinate Mn(2+).

This sequence belongs to the PINc/VapC protein family. In terms of assembly, crystallizes as a VapB15-VapC15(2) heterotrimer and as a VapB15(2)-VapC15(2) heterotetramer; each toxin pair forms a homodimer which creates a channel in which the antitoxin binds. The cofactor is Mg(2+). Mn(2+) is required as a cofactor.

RNase activity inhibited by EDTA. Its function is as follows. Toxic component of a type II toxin-antitoxin (TA) system. Degrades total E.coli RNA, which is partially inhibited by cognate antitoxin VapB15. Upon expression in M.smegmatis inhibits colony formation, which is neutralized by coexpression with VapB15. This chain is Ribonuclease VapC15, found in Mycobacterium tuberculosis (strain ATCC 25618 / H37Rv).